Consider the following 172-residue polypeptide: MAEYKKNNNNDDKDYIEKLVNIRRVVKVVKGGRIFGFSALVVVGDGNGKVGYGTGKAREVPVAIQKAMDKARKRMKSVSLVNGTLHYPIVSSVGAAKVYMQPASEGTGVIAGGPMRSVLEAVGVHNILAKCNGTRNPISVVRATVEGLTSMSSPQLVAAKRGKTVDQITRKG.

An S5 DRBM domain is found at 15-78 (YIEKLVNIRR…DKARKRMKSV (64 aa)).

This sequence belongs to the universal ribosomal protein uS5 family. In terms of assembly, part of the 30S ribosomal subunit. Contacts proteins S4 and S8.

With S4 and S12 plays an important role in translational accuracy. In terms of biological role, located at the back of the 30S subunit body where it stabilizes the conformation of the head with respect to the body. The sequence is that of Small ribosomal subunit protein uS5 from Ruthia magnifica subsp. Calyptogena magnifica.